A 932-amino-acid polypeptide reads, in one-letter code: Phosphoenolpyruvate carboxylase (932 aa).

Active-site residues include His164 and Lys594.

The protein belongs to the PEPCase type 1 family. Mg(2+) serves as cofactor.

It carries out the reaction oxaloacetate + phosphate = phosphoenolpyruvate + hydrogencarbonate. Forms oxaloacetate, a four-carbon dicarboxylic acid source for the tricarboxylic acid cycle. This chain is Phosphoenolpyruvate carboxylase, found in Bradyrhizobium diazoefficiens (strain JCM 10833 / BCRC 13528 / IAM 13628 / NBRC 14792 / USDA 110).